Here is a 395-residue protein sequence, read N- to C-terminus: NAC domain-containing protein 7 (395 aa).

Positions 7-156 (VPPGFRFHPT…GWVVCRVFKK (150 aa)) constitute an NAC domain. Residues 107–162 (IGMRKTLVFYKGRAPNGQKSDWIMHEYRLETDENGTPQEEGWVVCRVFKKRLAAVR) mediate DNA binding. Composition is skewed to polar residues over residues 344 to 362 (AATA…SNAE) and 382 to 395 (TAST…DLWK). A disordered region spans residues 344 to 395 (AATASASIQNNAKDTSNAEYQVDEEKDPKRASDMGEEYTASTSSSCQIDLWK).

The protein belongs to the plant vascular related NAC-domain protein family. In terms of assembly, interacts with NAC083/VNI2. Expressed in root, shoot and hypocotyl vascular elements, columella root caps, epidermal and cortex root cells and root-hypocotyl junctions. Observed predominantly in root imature xylem vessels. Present in root developing xylems. Specifically expressed in vessels in the secondary xylem of the root-hypocotyl region, and in vessels but not in interfascicular fibers in stems.

It localises to the nucleus. In terms of biological role, transcription activator that binds to the secondary wall NAC binding element (SNBE), 5'-(T/A)NN(C/T)(T/C/G)TNNNNNNNA(A/C)GN(A/C/T)(A/T)-3', in the promoter of target genes. Involved in xylem formation by promoting the expression of secondary wall-associated transcription factors and of genes involved in secondary wall biosynthesis and programmed cell death, genes driven by the secondary wall NAC binding element (SNBE). Triggers thickening of secondary walls. This Arabidopsis thaliana (Mouse-ear cress) protein is NAC domain-containing protein 7.